A 301-amino-acid chain; its full sequence is GTPase Era (301 aa).

The region spanning arginine 11 to asparagine 180 is the Era-type G domain. The G1 stretch occupies residues glycine 19–serine 26. Position 19 to 26 (glycine 19 to serine 26) interacts with GTP. The tract at residues glutamine 45 to arginine 49 is G2. The tract at residues aspartate 66–glycine 69 is G3. GTP is bound by residues aspartate 66 to isoleucine 70 and threonine 129 to aspartate 132. The interval threonine 129 to aspartate 132 is G4. The segment at valine 159–alanine 161 is G5. The region spanning leucine 210 to lysine 286 is the KH type-2 domain.

It belongs to the TRAFAC class TrmE-Era-EngA-EngB-Septin-like GTPase superfamily. Era GTPase family. Monomer.

The protein resides in the cytoplasm. It is found in the cell membrane. Functionally, an essential GTPase that binds both GDP and GTP, with rapid nucleotide exchange. Plays a role in 16S rRNA processing and 30S ribosomal subunit biogenesis and possibly also in cell cycle regulation and energy metabolism. The chain is GTPase Era from Tropheryma whipplei (strain TW08/27) (Whipple's bacillus).